Here is a 176-residue protein sequence, read N- to C-terminus: MTVDLHDFVATVEDYPEPGVSFRDISPLMGDGVAYKQAVDAIADFAKHLNVDLIAGPESRGFIVGSPLAYAMNIGFVPARKGGKLPREAVSASYTLEYGGVNELEIHKDAIKPGQRVLIVDDLLATGGTINATREIIEKLGGIVAGVAFIIELESLQGREKIMKAGEVPFLALMEY.

Belongs to the purine/pyrimidine phosphoribosyltransferase family. Homodimer.

It is found in the cytoplasm. It catalyses the reaction AMP + diphosphate = 5-phospho-alpha-D-ribose 1-diphosphate + adenine. The protein operates within purine metabolism; AMP biosynthesis via salvage pathway; AMP from adenine: step 1/1. In terms of biological role, catalyzes a salvage reaction resulting in the formation of AMP, that is energically less costly than de novo synthesis. The protein is Adenine phosphoribosyltransferase of Leuconostoc mesenteroides subsp. mesenteroides (strain ATCC 8293 / DSM 20343 / BCRC 11652 / CCM 1803 / JCM 6124 / NCDO 523 / NBRC 100496 / NCIMB 8023 / NCTC 12954 / NRRL B-1118 / 37Y).